Here is a 281-residue protein sequence, read N- to C-terminus: Bifunctional protein FolD (281 aa).

NADP(+)-binding positions include 164-166 (GAS), Ile189, and Ile230.

The protein belongs to the tetrahydrofolate dehydrogenase/cyclohydrolase family. Homodimer.

The catalysed reaction is (6R)-5,10-methylene-5,6,7,8-tetrahydrofolate + NADP(+) = (6R)-5,10-methenyltetrahydrofolate + NADPH. It catalyses the reaction (6R)-5,10-methenyltetrahydrofolate + H2O = (6R)-10-formyltetrahydrofolate + H(+). It functions in the pathway one-carbon metabolism; tetrahydrofolate interconversion. Catalyzes the oxidation of 5,10-methylenetetrahydrofolate to 5,10-methenyltetrahydrofolate and then the hydrolysis of 5,10-methenyltetrahydrofolate to 10-formyltetrahydrofolate. This is Bifunctional protein FolD from Sulfurovum sp. (strain NBC37-1).